A 223-amino-acid polypeptide reads, in one-letter code: Membrane-associated progesterone receptor component 2 (223 aa).

Positions 1 to 33 (MAAGDGDVKLGTLGSGSESSNDGGSESPGDAGA) are disordered. A glycan (O-linked (Xyl...) (chondroitin sulfate) serine) is linked at S15. Residues 15–33 (SGSESSNDGGSESPGDAGA) show a composition bias toward low complexity. A helical membrane pass occupies residues 42-66 (AAALALLTGGGEMLLNVALVALVLL). Phosphoserine occurs at positions 90, 104, and 208. One can recognise a Cytochrome b5 heme-binding domain in the interval 102–201 (DFSLEQLRQY…EKYDYVGRLL (100 aa)). The tract at residues 202 to 223 (KPGEEPSEYTDEEDTKDHNKQD) is disordered. The span at 206–215 (EPSEYTDEED) shows a compositional bias: acidic residues. Position 210 is a phosphotyrosine (Y210). Residue T211 is modified to Phosphothreonine.

It belongs to the cytochrome b5 family. MAPR subfamily. Interacts with PGRMC1. Interacts with AAAS. As to expression, expressed by endometrial glands and stroma (at protein level). Detected in urine (at protein level).

The protein localises to the membrane. It is found in the nucleus envelope. The protein resides in the endoplasmic reticulum. It localises to the secreted. Required for the maintenance of uterine histoarchitecture and normal female reproductive lifespan. May serve as a universal non-classical progesterone receptor in the uterus. Intracellular heme chaperone required for delivery of labile, or signaling heme, to the nucleus. Plays a role in adipocyte function and systemic glucose homeostasis. In brown fat, which has a high demand for heme, delivery of labile heme in the nucleus regulates the activity of heme-responsive transcriptional repressors such as NR1D1 and BACH1. This is Membrane-associated progesterone receptor component 2 from Homo sapiens (Human).